We begin with the raw amino-acid sequence, 66 residues long: Large ribosomal subunit protein bL31 (66 aa).

Zn(2+)-binding residues include Cys-16, Cys-18, Cys-36, and Cys-39.

This sequence belongs to the bacterial ribosomal protein bL31 family. Type A subfamily. Part of the 50S ribosomal subunit. Zn(2+) is required as a cofactor.

Its function is as follows. Binds the 23S rRNA. The sequence is that of Large ribosomal subunit protein bL31 from Sulfurimonas denitrificans (strain ATCC 33889 / DSM 1251) (Thiomicrospira denitrificans (strain ATCC 33889 / DSM 1251)).